Reading from the N-terminus, the 306-residue chain is UDP-3-O-acyl-N-acetylglucosamine deacetylase (306 aa).

Zn(2+)-binding residues include His-79, His-238, and Asp-242. The Proton donor role is filled by His-265.

This sequence belongs to the LpxC family. It depends on Zn(2+) as a cofactor.

The enzyme catalyses a UDP-3-O-[(3R)-3-hydroxyacyl]-N-acetyl-alpha-D-glucosamine + H2O = a UDP-3-O-[(3R)-3-hydroxyacyl]-alpha-D-glucosamine + acetate. It functions in the pathway glycolipid biosynthesis; lipid IV(A) biosynthesis; lipid IV(A) from (3R)-3-hydroxytetradecanoyl-[acyl-carrier-protein] and UDP-N-acetyl-alpha-D-glucosamine: step 2/6. Its function is as follows. Catalyzes the hydrolysis of UDP-3-O-myristoyl-N-acetylglucosamine to form UDP-3-O-myristoylglucosamine and acetate, the committed step in lipid A biosynthesis. In Shewanella frigidimarina (strain NCIMB 400), this protein is UDP-3-O-acyl-N-acetylglucosamine deacetylase.